The chain runs to 404 residues: S-adenosylmethionine synthase (404 aa).

Residue histidine 16 participates in ATP binding. Residue aspartate 18 participates in Mg(2+) binding. Residue glutamate 44 coordinates K(+). Residues glutamate 57 and glutamine 100 each coordinate L-methionine. The flexible loop stretch occupies residues 100-110 (QSPEINQGVAR). ATP is bound by residues 177–179 (DGK), aspartate 257, 263–264 (RK), alanine 280, and lysine 284. Aspartate 257 is a binding site for L-methionine. Lysine 288 provides a ligand contact to L-methionine.

Belongs to the AdoMet synthase family. Homotetramer; dimer of dimers. Requires Mg(2+) as cofactor. The cofactor is K(+).

The protein localises to the cytoplasm. It carries out the reaction L-methionine + ATP + H2O = S-adenosyl-L-methionine + phosphate + diphosphate. Its pathway is amino-acid biosynthesis; S-adenosyl-L-methionine biosynthesis; S-adenosyl-L-methionine from L-methionine: step 1/1. Functionally, catalyzes the formation of S-adenosylmethionine (AdoMet) from methionine and ATP. The overall synthetic reaction is composed of two sequential steps, AdoMet formation and the subsequent tripolyphosphate hydrolysis which occurs prior to release of AdoMet from the enzyme. The sequence is that of S-adenosylmethionine synthase from Bifidobacterium adolescentis (strain ATCC 15703 / DSM 20083 / NCTC 11814 / E194a).